The sequence spans 543 residues: Phosphoenolpyruvate carboxykinase (ATP) (543 aa).

244-251 (GLSGTGKT) lines the ATP pocket.

This sequence belongs to the phosphoenolpyruvate carboxykinase (ATP) family.

It carries out the reaction oxaloacetate + ATP = phosphoenolpyruvate + ADP + CO2. It participates in carbohydrate biosynthesis; gluconeogenesis. In Kluyveromyces lactis (strain ATCC 8585 / CBS 2359 / DSM 70799 / NBRC 1267 / NRRL Y-1140 / WM37) (Yeast), this protein is Phosphoenolpyruvate carboxykinase (ATP) (PCK1).